Here is a 128-residue protein sequence, read N- to C-terminus: Ribonuclease pancreatic (128 aa).

Residues 1-20 are disordered; it reads KETAAMKFQRQHMDSGSSLS. 2 residues coordinate substrate: Lys7 and Arg10. The Proton acceptor role is filled by His12. 4 cysteine pairs are disulfide-bonded: Cys26/Cys84, Cys40/Cys95, Cys58/Cys110, and Cys65/Cys72. Asn34 is a glycosylation site (N-linked (GlcNAc...) asparagine). Substrate contacts are provided by residues 41–45, Lys66, and Arg85; that span reads KPVNT. Residue His119 is the Proton donor of the active site.

It belongs to the pancreatic ribonuclease family. In terms of assembly, monomer. Interacts with and forms tight 1:1 complexes with RNH1. Dimerization of two such complexes may occur. Interaction with RNH1 inhibits this protein. As to expression, pancreas.

It is found in the secreted. The enzyme catalyses an [RNA] containing cytidine + H2O = an [RNA]-3'-cytidine-3'-phosphate + a 5'-hydroxy-ribonucleotide-3'-[RNA].. It catalyses the reaction an [RNA] containing uridine + H2O = an [RNA]-3'-uridine-3'-phosphate + a 5'-hydroxy-ribonucleotide-3'-[RNA].. Functionally, endonuclease that catalyzes the cleavage of RNA on the 3' side of pyrimidine nucleotides. Acts on single-stranded and double-stranded RNA. The protein is Ribonuclease pancreatic (RNASE1) of Choloepus hoffmanni (Hoffmann's two-fingered sloth).